Consider the following 290-residue polypeptide: Glutaredoxin domain-containing cysteine-rich protein 1 (290 aa).

Residues 127–234 form the Glutaredoxin domain; the sequence is LQQPSADLEF…DLLTKIERVQ (108 aa).

It belongs to the GRXCR1 family. In the inner ear, expressed predominantly in sensory hair cells and their stereocilia bundles with higher levels in outer hair cells (OHC) at P1 and in inner hair cells (IHC) at P5. At P1, expression is prominent in each row of stereocilia within bundles including immature shorter stereocilia. Expression is also observed in apical microvilli of sensory cells at P1 and in kinocilia at P1 and P5. In the adult, expression is localized throughout the length of the stereocilia of both OHC and IHC (at protein level).

The protein localises to the cell projection. It localises to the stereocilium. It is found in the microvillus. Its subcellular location is the kinocilium. Its function is as follows. May play a role in actin filament architecture in developing stereocilia of sensory cells. The chain is Glutaredoxin domain-containing cysteine-rich protein 1 (Grxcr1) from Mus musculus (Mouse).